We begin with the raw amino-acid sequence, 383 residues long: MPPPQIKQDLNRSGWESTDFPSVCENCLPDNPYVQMLKEDYGAECKICTRPFTIFRWKADRTARTKRTTICLTCARLKNCCQCCMLDLSFGLPIVVRDAALKMVAPGPESSINREYYAQEHEKEIQEGRGAVEAYEKTDEKARELLRRLANSEPYYRKPRQQLEGPSDDSTEAQPTDAPVVQSRYGNGPGPIRTSESRRGTPLPGRGRGNMRGGRAGRPFPGTAQIPPSPEDYLPPADPNIMSLFVTGVEDDLPEHTLRTFFTQFGQLRSLICSHRAHCAFINFATREGAEAAAQHCKGKAVIQGCPLRVRWGKPKPLDNMDREERMKNAREGRLTVQAQKDGESGQRAITAAGEPATEKPQSFVVAPPPGSGDVQYSSLSGD.

Residues 148-228 (RLANSEPYYR…PFPGTAQIPP (81 aa)) form a disordered region. Positions 206-216 (RGRGNMRGGRA) are enriched in gly residues. The region spanning 242 to 315 (MSLFVTGVED…CPLRVRWGKP (74 aa)) is the RRM domain. The disordered stretch occupies residues 330 to 383 (AREGRLTVQAQKDGESGQRAITAAGEPATEKPQSFVVAPPPGSGDVQYSSLSGD).

It belongs to the SLT11 family. In terms of assembly, associated with the spliceosome.

The protein resides in the nucleus. Its function is as follows. Involved in pre-mRNA splicing. Facilitates the cooperative formation of U2/U6 helix II in association with stem II in the spliceosome. Binds to RNA. The polypeptide is Pre-mRNA-splicing factor slt11 (slt11) (Aspergillus fumigatus (strain ATCC MYA-4609 / CBS 101355 / FGSC A1100 / Af293) (Neosartorya fumigata)).